The primary structure comprises 418 residues: Trans-acting enoyl reductase (418 aa).

The protein belongs to the saccharopine dehydrogenase family. Enoyl reductase subfamily.

Functionally, involved in the reduction of the double bond between C-4 and C-5 during phthiocerol dimycocerosates (DIM A) and glycosylated phenolphthiocerol dimycocerosates (PGL) biosynthesis. In Mycobacterium ulcerans (strain Agy99), this protein is Trans-acting enoyl reductase.